The chain runs to 278 residues: MDIKSFEKIQLYGFNNLTKTLSFNIYDICYAKAPEQSKAYIAYIDEQYNAERLTKILSNVADITGANILSISKQDYDPQGASVTMLVAEEMTVPTLTPESLTGESPGPLPGNKPSPGSIVTHLDKSHVTVHTYPETHPLDGISTFRADIDVSTCGHISPIKALNYLIHSFESDIVTIDYRVRGFTRDINGQKYFIDHDINSIQNYIAKDILNLYHAIDVNVYQENIFHTKMTLKDFKLNNYLFGVSEEELSDHESASIKDQLRDEMQEIFYGRNVTKV.

The disordered stretch occupies residues 96-115 (LTPESLTGESPGPLPGNKPS). The active-site Schiff-base intermediate with substrate; via pyruvic acid is the Ser126. Pyruvic acid (Ser); by autocatalysis is present on Ser126. Residue His131 is the Proton acceptor; for processing activity of the active site. The Proton donor; for catalytic activity role is filled by Cys154.

Belongs to the prokaryotic AdoMetDC family. Type 2 subfamily. As to quaternary structure, heterooctamer of four alpha and four beta chains arranged as a tetramer of alpha/beta heterodimers. Pyruvate is required as a cofactor. Is synthesized initially as an inactive proenzyme. Formation of the active enzyme involves a self-maturation process in which the active site pyruvoyl group is generated from an internal serine residue via an autocatalytic post-translational modification. Two non-identical subunits are generated from the proenzyme in this reaction, and the pyruvate is formed at the N-terminus of the alpha chain, which is derived from the carboxyl end of the proenzyme. The post-translation cleavage follows an unusual pathway, termed non-hydrolytic serinolysis, in which the side chain hydroxyl group of the serine supplies its oxygen atom to form the C-terminus of the beta chain, while the remainder of the serine residue undergoes an oxidative deamination to produce ammonia and the pyruvoyl group blocking the N-terminus of the alpha chain.

It catalyses the reaction S-adenosyl-L-methionine + H(+) = S-adenosyl 3-(methylsulfanyl)propylamine + CO2. It functions in the pathway amine and polyamine biosynthesis; S-adenosylmethioninamine biosynthesis; S-adenosylmethioninamine from S-adenosyl-L-methionine: step 1/1. Catalyzes the decarboxylation of S-adenosylmethionine to S-adenosylmethioninamine (dcAdoMet), the propylamine donor required for the synthesis of the polyamines spermine and spermidine from the diamine putrescine. This chain is S-adenosylmethionine decarboxylase proenzyme, found in Alkaliphilus metalliredigens (strain QYMF).